The sequence spans 73 residues: UPF0150 protein ssl0259 (73 aa).

It belongs to the UPF0150 family.

The protein is UPF0150 protein ssl0259 of Synechocystis sp. (strain ATCC 27184 / PCC 6803 / Kazusa).